A 652-amino-acid polypeptide reads, in one-letter code: UvrABC system protein C (652 aa).

The 80-residue stretch at 20-99 (PEPGCYLMRD…IKNHQPHFNV (80 aa)) folds into the GIY-YIG domain. Positions 209-244 (DELQRLLDEQMNRYAERLDFESAARVRDQLQGLDQL) constitute a UVR domain.

This sequence belongs to the UvrC family. Interacts with UvrB in an incision complex.

The protein resides in the cytoplasm. Its function is as follows. The UvrABC repair system catalyzes the recognition and processing of DNA lesions. UvrC both incises the 5' and 3' sides of the lesion. The N-terminal half is responsible for the 3' incision and the C-terminal half is responsible for the 5' incision. This is UvrABC system protein C from Parasynechococcus marenigrum (strain WH8102).